Consider the following 488-residue polypeptide: Lysine--tRNA ligase (488 aa).

Glutamate 397 and glutamate 404 together coordinate Mg(2+).

Belongs to the class-II aminoacyl-tRNA synthetase family. Homodimer. Mg(2+) serves as cofactor.

It localises to the cytoplasm. The catalysed reaction is tRNA(Lys) + L-lysine + ATP = L-lysyl-tRNA(Lys) + AMP + diphosphate. In Mycoplasmopsis fermentans (strain ATCC 19989 / NBRC 14854 / NCTC 10117 / PG18) (Mycoplasma fermentans), this protein is Lysine--tRNA ligase (lysS).